The following is a 490-amino-acid chain: Membrane-bound lytic murein transglycosylase F (490 aa).

Residues 1–32 (MFALTAYRLRCAAWLLATGIFLLLAGCSEAKA) form the signal peptide. A non-LT domain region spans residues 33-269 (PTALERVQKE…RLKDRYYGHV (237 aa)). The interval 270-490 (DVLGYVGAYT…PEEDSGDEKL (221 aa)) is LT domain. The active site involves glutamate 316. The tract at residues 467–490 (AESGLHLPGVNKTRPEEDSGDEKL) is disordered. Positions 479 to 490 (TRPEEDSGDEKL) are enriched in basic and acidic residues.

In the N-terminal section; belongs to the bacterial solute-binding protein 3 family. It in the C-terminal section; belongs to the transglycosylase Slt family.

It localises to the cell outer membrane. It carries out the reaction Exolytic cleavage of the (1-&gt;4)-beta-glycosidic linkage between N-acetylmuramic acid (MurNAc) and N-acetylglucosamine (GlcNAc) residues in peptidoglycan, from either the reducing or the non-reducing ends of the peptidoglycan chains, with concomitant formation of a 1,6-anhydrobond in the MurNAc residue.. Its function is as follows. Murein-degrading enzyme that degrades murein glycan strands and insoluble, high-molecular weight murein sacculi, with the concomitant formation of a 1,6-anhydromuramoyl product. Lytic transglycosylases (LTs) play an integral role in the metabolism of the peptidoglycan (PG) sacculus. Their lytic action creates space within the PG sacculus to allow for its expansion as well as for the insertion of various structures such as secretion systems and flagella. The polypeptide is Membrane-bound lytic murein transglycosylase F (Pseudomonas aeruginosa (strain ATCC 15692 / DSM 22644 / CIP 104116 / JCM 14847 / LMG 12228 / 1C / PRS 101 / PAO1)).